The chain runs to 500 residues: 4-aminobutyrate aminotransferase, mitochondrial (500 aa).

Residues 1–28 (MASMLLAQRLACSFQHSYRLLVPGSRHI) constitute a mitochondrion transit peptide. Cysteine 163 contributes to the [2Fe-2S] cluster binding site. 164-165 (GS) contacts pyridoxal 5'-phosphate. Cysteine 166 serves as a coordination point for [2Fe-2S] cluster. Arginine 220 contacts substrate. The residue at position 231 (lysine 231) is an N6-succinyllysine. N6-acetyllysine; alternate is present on lysine 252. Lysine 252 is modified (N6-succinyllysine; alternate). N6-acetyllysine occurs at positions 279 and 318. Lysine 357 carries the N6-(pyridoxal phosphate)lysine modification. A pyridoxal 5'-phosphate-binding site is contributed by threonine 381. Lysine 413 bears the N6-acetyllysine; alternate mark. Lysine 413 is subject to N6-succinyllysine; alternate. 2 positions are modified to N6-acetyllysine: lysine 452 and lysine 470.

Belongs to the class-III pyridoxal-phosphate-dependent aminotransferase family. Homodimer; disulfide-linked. It depends on pyridoxal 5'-phosphate as a cofactor. [2Fe-2S] cluster is required as a cofactor. In terms of tissue distribution, liver &gt; pancreas &gt; brain &gt; kidney &gt; heart &gt; placenta.

It localises to the mitochondrion matrix. It catalyses the reaction 4-aminobutanoate + 2-oxoglutarate = succinate semialdehyde + L-glutamate. The catalysed reaction is (S)-3-amino-2-methylpropanoate + 2-oxoglutarate = 2-methyl-3-oxopropanoate + L-glutamate. Its function is as follows. Catalyzes the conversion of gamma-aminobutyrate and L-beta-aminoisobutyrate to succinate semialdehyde and methylmalonate semialdehyde, respectively. Can also convert delta-aminovalerate and beta-alanine. The sequence is that of 4-aminobutyrate aminotransferase, mitochondrial from Homo sapiens (Human).